Here is a 481-residue protein sequence, read N- to C-terminus: MIKIETVLDILKKDGLFREIIDQGHYHYNYSKVIFDSISYDSRKVTEDTLFFAKGAAFKKEYLLSAITQGLAWYVAEKDYEVGIPVIIVNDIKKAMSLIAMEFYGNPQEKLKLLAFTGTKGKTTAAYFAYNILSQGHRPAMLSTMNTTLDGETFFKSALTTPESIDLFDMMNQAVQNDRTHLIMEVSSQAYLVKRVYGLTFDVGVFLNISPDHIGPIEHPSFEDYFYHKRLLMEKSRAVIINSDMDHFSVLKEQVEDQDHDFYGSQFDNQIENSKAFSFSATGKLAGDYDIQLIGNFNQENAVAAGLACLRLGASLEDIKKGIAATRVPGRMEVLTQKNGAKVFIDYAHNGDSLKKLINVVETHQTGKIALVLGSTGNKGESRRKDFGLLLNQHPEIQVFLTADDPNYEDPMAIADEISSYINHPVEKIADRQEAIKAAMAITNHELDAVIIAGKGADCYQIIQGKKESYPGDTAVAENYL.

Ser42 serves as a coordination point for UDP-N-acetyl-alpha-D-muramoyl-L-alanyl-D-glutamate. Residue 118–124 coordinates ATP; it reads GTKGKTT. Residues 160–161, Ser187, and Arg195 contribute to the UDP-N-acetyl-alpha-D-muramoyl-L-alanyl-D-glutamate site; that span reads TT. Lys229 carries the post-translational modification N6-carboxylysine. The L-lysine recognition motif motif lies at 404-407; that stretch reads DDPN.

Belongs to the MurCDEF family. MurE subfamily. In terms of processing, carboxylation is probably crucial for Mg(2+) binding and, consequently, for the gamma-phosphate positioning of ATP.

The protein resides in the cytoplasm. The catalysed reaction is UDP-N-acetyl-alpha-D-muramoyl-L-alanyl-D-glutamate + L-lysine + ATP = UDP-N-acetyl-alpha-D-muramoyl-L-alanyl-gamma-D-glutamyl-L-lysine + ADP + phosphate + H(+). Its pathway is cell wall biogenesis; peptidoglycan biosynthesis. Catalyzes the addition of L-lysine to the nucleotide precursor UDP-N-acetylmuramoyl-L-alanyl-D-glutamate (UMAG) in the biosynthesis of bacterial cell-wall peptidoglycan. The sequence is that of UDP-N-acetylmuramoyl-L-alanyl-D-glutamate--L-lysine ligase (murE) from Streptococcus pneumoniae serotype 4 (strain ATCC BAA-334 / TIGR4).